We begin with the raw amino-acid sequence, 3268 residues long: E3 ubiquitin-protein ligase TOM1 (3268 aa).

Ser1890 carries the post-translational modification Phosphoserine. Disordered stretches follow at residues 1941 to 2023 (VFSD…EDDA) and 2038 to 2083 (GYDV…MGDS). The segment covering 1942-1955 (FSDEDDDMGEEDAD) has biased composition (acidic residues). The span at 1967 to 1976 (SSEMQSSTAD) shows a compositional bias: polar residues. Acidic residues-rich tracts occupy residues 1978-1988 (TDVDYEVDDAD), 2042-2053 (DLSDYDVDESDW), and 2063-2074 (SDEDSESSEDEP). Thr2096 carries the phosphothreonine modification. Residues Ser2119, Ser2376, Ser2406, and Ser2418 each carry the phosphoserine modification. Acidic residues predominate over residues 2416–2426 (DVSNNDEEVEN). A disordered region spans residues 2416–2443 (DVSNNDEEVENGLDHGNSNDRNNADPEK). The HECT domain occupies 2932-3268 (TNDEIKNSKL…NEGHEGFGLA (337 aa)). Catalysis depends on Cys3235, which acts as the Glycyl thioester intermediate.

It belongs to the UPL family. TOM1/PTR1 subfamily. As to quaternary structure, interacts with the ADA3/NGG1 subunit of the SAGA complex. Interacts with KRR1.

It localises to the nucleus. The protein resides in the nucleolus. It catalyses the reaction S-ubiquitinyl-[E2 ubiquitin-conjugating enzyme]-L-cysteine + [acceptor protein]-L-lysine = [E2 ubiquitin-conjugating enzyme]-L-cysteine + N(6)-ubiquitinyl-[acceptor protein]-L-lysine.. It participates in protein modification; protein ubiquitination. Its function is as follows. Probable ubiquitin ligase protein involved in many cellular processes, such as transcription regulation, maintenance of nuclear structure, cell cycle, mRNA export and rRNA maturation. E3 ubiquitin ligase proteins mediate ubiquitination and subsequent proteasomal degradation of target proteins. Involved in transcription regulation by interacting, and probably mediating, ubiquitination of some subunit of the SAGA complex. Required for SPT7 ubiquitination. Participates in mRNA export from the nucleus by regulating the transport of hnRNP proteins. Required for the shuttling of hnRNP protein NAB2, probably by mediating ubiquitination of a protein associated with NAB2. Also required for full induction of the general stress and heat-shock responses. Involved in 18S rRNA maturation by affecting several early steps in the rRNA processing pathway. This chain is E3 ubiquitin-protein ligase TOM1 (TOM1), found in Saccharomyces cerevisiae (strain ATCC 204508 / S288c) (Baker's yeast).